The primary structure comprises 314 residues: 4-hydroxy-3-methylbut-2-enyl diphosphate reductase (314 aa).

A [4Fe-4S] cluster-binding site is contributed by Cys12. (2E)-4-hydroxy-3-methylbut-2-enyl diphosphate contacts are provided by His41 and His74. Dimethylallyl diphosphate contacts are provided by His41 and His74. Isopentenyl diphosphate is bound by residues His41 and His74. Cys96 contributes to the [4Fe-4S] cluster binding site. (2E)-4-hydroxy-3-methylbut-2-enyl diphosphate is bound at residue His124. His124 contributes to the dimethylallyl diphosphate binding site. Residue His124 participates in isopentenyl diphosphate binding. The Proton donor role is filled by Glu126. Thr167 provides a ligand contact to (2E)-4-hydroxy-3-methylbut-2-enyl diphosphate. Residue Cys197 participates in [4Fe-4S] cluster binding. Residues Ser225, Ser226, Asn227, and Ser269 each contribute to the (2E)-4-hydroxy-3-methylbut-2-enyl diphosphate site. Positions 225, 226, 227, and 269 each coordinate dimethylallyl diphosphate. Positions 225, 226, 227, and 269 each coordinate isopentenyl diphosphate.

Belongs to the IspH family. It depends on [4Fe-4S] cluster as a cofactor.

The enzyme catalyses isopentenyl diphosphate + 2 oxidized [2Fe-2S]-[ferredoxin] + H2O = (2E)-4-hydroxy-3-methylbut-2-enyl diphosphate + 2 reduced [2Fe-2S]-[ferredoxin] + 2 H(+). It catalyses the reaction dimethylallyl diphosphate + 2 oxidized [2Fe-2S]-[ferredoxin] + H2O = (2E)-4-hydroxy-3-methylbut-2-enyl diphosphate + 2 reduced [2Fe-2S]-[ferredoxin] + 2 H(+). Its pathway is isoprenoid biosynthesis; dimethylallyl diphosphate biosynthesis; dimethylallyl diphosphate from (2E)-4-hydroxy-3-methylbutenyl diphosphate: step 1/1. It functions in the pathway isoprenoid biosynthesis; isopentenyl diphosphate biosynthesis via DXP pathway; isopentenyl diphosphate from 1-deoxy-D-xylulose 5-phosphate: step 6/6. Its function is as follows. Catalyzes the conversion of 1-hydroxy-2-methyl-2-(E)-butenyl 4-diphosphate (HMBPP) into a mixture of isopentenyl diphosphate (IPP) and dimethylallyl diphosphate (DMAPP). Acts in the terminal step of the DOXP/MEP pathway for isoprenoid precursor biosynthesis. The chain is 4-hydroxy-3-methylbut-2-enyl diphosphate reductase from Pseudoalteromonas atlantica (strain T6c / ATCC BAA-1087).